The chain runs to 460 residues: Probable elastin-binding protein EbpS (460 aa).

Basic and acidic residues predominate over residues 1–40 (MSNNNFKDDFEKNRQSINPDEHQTELKEDDKTNENKKEAD). Residues 1–277 (MSNNNFKDDF…NQYNDQSEGK (277 aa)) are disordered. Residues 41–57 (SQNSLSNNSNQQFPPRN) show a composition bias toward low complexity. Residues 74–128 (QQDDKHQKNSDAKTTEGSLDDRYDEAQLQQQHDKSQQQNKTEKQSQDNRMKDGKD) are compositionally biased toward basic and acidic residues. Over residues 177–192 (ATGAGIAGAAGVAGAA) the composition is skewed to low complexity. Residues 203-226 (DKQDSKHSNHENDEKSVKNDDQKQ) show a composition bias toward basic and acidic residues. Low complexity predominate over residues 264–273 (SNQNNQYNDQ). Residues 285–305 (ILLPLIAAILILGAIAIFGGM) traverse the membrane as a helical segment. Residues 313-359 (SKSDDQKIANQSKKDSDKKDGAQSEDNKDKKSDSNKDKKSDSDKNAD) are compositionally biased toward basic and acidic residues. Residues 313–411 (SKSDDQKIAN…NQQATQGQQS (99 aa)) form a disordered region. Residues 364-411 (NSSSNPNATSTNNNDNVANNNSNYTNQNQQDNANQNSNNQQATQGQQS) are compositionally biased toward low complexity. A LysM domain is found at 410-458 (QSHTVYGQENLYRIAIQYYGEGTQANVDKIKRANGLSSNNIHNGQTLVI).

It is found in the cell membrane. The sequence is that of Probable elastin-binding protein EbpS (ebpS) from Staphylococcus epidermidis (strain ATCC 35984 / DSM 28319 / BCRC 17069 / CCUG 31568 / BM 3577 / RP62A).